Here is a 292-residue protein sequence, read N- to C-terminus: MAITVTAKQVKELRDRTAAGMMDCKKALVEAEGDLELAIENMRKSGAVKAAKKAGRVAAEGVILAKVEGSVALLAEVNCETDFVAMDKSFLAFANKIAEIALANKVASVEALNELAYDGDTVEVARANLVSKIGENISIRRLHIVEGENLGAYVHSGKIGVISVLKGGDADLSKDIAMHVAAAAPQYVKAEDVPADVVAKEKEIQLAIAVESGKPEAIAEKMVAGRMAKFSGEVSLTSQPFIKDPSIKVAKLLKDAGAEVISFIRLEVGEGIDKKVEDFAAEVAATMAASAK.

Residues 81–84 (TDFV) are involved in Mg(2+) ion dislocation from EF-Tu.

This sequence belongs to the EF-Ts family.

Its subcellular location is the cytoplasm. Associates with the EF-Tu.GDP complex and induces the exchange of GDP to GTP. It remains bound to the aminoacyl-tRNA.EF-Tu.GTP complex up to the GTP hydrolysis stage on the ribosome. This chain is Elongation factor Ts, found in Psychromonas ingrahamii (strain DSM 17664 / CCUG 51855 / 37).